The following is a 265-amino-acid chain: Apolipoprotein A-I (265 aa).

The N-terminal stretch at 1 to 18 (MKALVLTLAVLFFTGSQA) is a signal peptide. 2 tandem repeats follow at residues 67–88 (LKLL…EQLG) and 89–110 (PVTQ…QEMN). A 10 X approximate tandem repeats region spans residues 67-265 (LKLLDNWDSL…DEASKKLNAQ (199 aa)). Met109 is modified (methionine sulfoxide). One copy of the 3; half-length repeat lies at 111–121 (KDLEEVKQKVQ). 5 consecutive repeat copies span residues 122–142 (PYLD…RQKV), 144–165 (PLGE…DKLT), 166–187 (PLAE…QQLA), 188–209 (PYSD…EGGG), and 210–230 (SLAE…EKAK). One copy of the 9; half-length repeat lies at 231–241 (PALEDLRQGLL). Repeat 10 spans residues 242-265 (PVLESLKVSILAAIDEASKKLNAQ).

The protein belongs to the apolipoprotein A1/A4/E family. As to quaternary structure, homodimer. Interacts with APOA1BP and CLU. Component of a sperm activating protein complex (SPAP), consisting of APOA1, an immunoglobulin heavy chain, an immunoglobulin light chain and albumin. Interacts with NDRG1. Interacts with SCGB3A2. Interacts with NAXE and YJEFN3. Post-translationally, glycosylated. Palmitoylated. In terms of processing, phosphorylation sites are present in the extracellular medium. Major protein of plasma HDL, also found in chylomicrons.

Its subcellular location is the secreted. Its function is as follows. Participates in the reverse transport of cholesterol from tissues to the liver for excretion by promoting cholesterol efflux from tissues and by acting as a cofactor for the lecithin cholesterol acyltransferase (LCAT). As part of the SPAP complex, activates spermatozoa motility. The protein is Apolipoprotein A-I (APOA1) of Physeter macrocephalus (Sperm whale).